A 517-amino-acid chain; its full sequence is MAKTNLNDFDKIIVLDFGSQYNQLITRRIRDFGIYSELLPHDLSIEKIKKMAPKGIIFSGGPNSVYDEGALKVDPEIFKLGIPILGICYGMQLMSYDLGGKVEKADNSEYGRADIEVTDPNAVLFEGLPKEQYVWMSHGDLVTKAPEGFKVTAKSKNCPISAIANDEKKFYGIQFHAEVRNSEYGLDILKNFAFNVCDAKANWTMDDFIEMQVDEIREKVGDKKVILGLSGGVDSSVTATLLHKAIGDQLTAIFVDHGMLRKDEGDQVMQALNKDLGVNIIRVNAQKRFLDKLKGVTDPEQKRKIIGKEFIEVFNEEAKKLKDVDFLAQGTLYTDVIESGTNTAQTIKSHHNVGGLPEDMHFELIEPLRKLFKDEVRELGEKLGIPHDLVWRQPFPGPGLAIRVLGEVTEDKLKIVRESDAILRDEIKKAGLQEDIWQYFTVLPGIRSVGVMGDGRTYDYTIGIRAVTSIDGMTADFAKLPWDVLSKISTRIVDECDHINRVVYDITSKPPSTIEWE.

Residues 11–202 form the Glutamine amidotransferase type-1 domain; that stretch reads KIIVLDFGSQ…AFNVCDAKAN (192 aa). The active-site Nucleophile is the cysteine 88. Catalysis depends on residues histidine 176 and glutamate 178. The GMPS ATP-PPase domain maps to 203–392; the sequence is WTMDDFIEMQ…LGIPHDLVWR (190 aa). 230–236 is a binding site for ATP; that stretch reads SGGVDSS.

As to quaternary structure, homodimer.

It catalyses the reaction XMP + L-glutamine + ATP + H2O = GMP + L-glutamate + AMP + diphosphate + 2 H(+). It functions in the pathway purine metabolism; GMP biosynthesis; GMP from XMP (L-Gln route): step 1/1. Catalyzes the synthesis of GMP from XMP. This chain is GMP synthase [glutamine-hydrolyzing], found in Lactobacillus gasseri (strain ATCC 33323 / DSM 20243 / BCRC 14619 / CIP 102991 / JCM 1131 / KCTC 3163 / NCIMB 11718 / NCTC 13722 / AM63).